The sequence spans 66 residues: Small ribosomal subunit protein eS27 (66 aa).

The Zn(2+) site is built by cysteine 21, cysteine 24, cysteine 40, and cysteine 43. The segment at 21–43 (CPNCGNEQTIFSHATFPVRCLSC) adopts a C4-type zinc-finger fold.

Belongs to the eukaryotic ribosomal protein eS27 family. As to quaternary structure, part of the 30S ribosomal subunit. It depends on Zn(2+) as a cofactor.

In Saccharolobus solfataricus (strain ATCC 35092 / DSM 1617 / JCM 11322 / P2) (Sulfolobus solfataricus), this protein is Small ribosomal subunit protein eS27.